Here is a 200-residue protein sequence, read N- to C-terminus: Large ribosomal subunit protein uL4 (200 aa).

The tract at residues 42 to 65 (TRAQKTRSDVSGGGAKPWRQKGTG) is disordered.

The protein belongs to the universal ribosomal protein uL4 family. In terms of assembly, part of the 50S ribosomal subunit.

Its function is as follows. One of the primary rRNA binding proteins, this protein initially binds near the 5'-end of the 23S rRNA. It is important during the early stages of 50S assembly. It makes multiple contacts with different domains of the 23S rRNA in the assembled 50S subunit and ribosome. Forms part of the polypeptide exit tunnel. The protein is Large ribosomal subunit protein uL4 of Photobacterium profundum (strain SS9).